Consider the following 294-residue polypeptide: dTDP-4-dehydrorhamnose reductase (294 aa).

Residues 11–13 (GQL), 38–39 (DI), and 62–64 (AYT) each bind NADH. NADPH-binding positions include 12-13 (QL), 38-39 (DI), and 62-64 (AYT). 103–104 (TD) provides a ligand contact to dTDP-beta-L-rhamnose. Residues tyrosine 127 and lysine 131 each coordinate NADH. 2 residues coordinate NADPH: tyrosine 127 and lysine 131. The Proton donor/acceptor role is filled by tyrosine 127. Tryptophan 152 provides a ligand contact to dTDP-beta-L-rhamnose.

Belongs to the dTDP-4-dehydrorhamnose reductase family. As to quaternary structure, homodimer. The cofactor is Mg(2+).

The enzyme catalyses dTDP-beta-L-rhamnose + NADP(+) = dTDP-4-dehydro-beta-L-rhamnose + NADPH + H(+). The protein operates within carbohydrate biosynthesis; dTDP-L-rhamnose biosynthesis. It functions in the pathway bacterial outer membrane biogenesis; LPS O-antigen biosynthesis. Involved in the biosynthesis of the dTDP-L-rhamnose which is an important component of lipopolysaccharide (LPS). Catalyzes the reduction of dTDP-6-deoxy-L-lyxo-4-hexulose to yield dTDP-L-rhamnose. The polypeptide is dTDP-4-dehydrorhamnose reductase (Aggregatibacter actinomycetemcomitans (Actinobacillus actinomycetemcomitans)).